Reading from the N-terminus, the 662-residue chain is UvrABC system protein B (662 aa).

One can recognise a Helicase ATP-binding domain in the interval 25-182; that stretch reads KGIEKREKFQ…KKLVEIQYER (158 aa). 38-45 is an ATP binding site; sequence GVTGSGKT. The short motif at 91-114 is the Beta-hairpin element; the sequence is YYDYYQPEAYVAQSDTYIEKDASI. The region spanning 429-595 is the Helicase C-terminal domain; it reads QIDDLYTSIQ…TIIKDIREVI (167 aa). The 36-residue stretch at 622-657 folds into the UVR domain; that stretch reads DKLIEKYEEEMKEAAQNLQFEKAAHLRDVIYKLKKD.

Belongs to the UvrB family. As to quaternary structure, forms a heterotetramer with UvrA during the search for lesions. Interacts with UvrC in an incision complex.

The protein localises to the cytoplasm. Its function is as follows. The UvrABC repair system catalyzes the recognition and processing of DNA lesions. A damage recognition complex composed of 2 UvrA and 2 UvrB subunits scans DNA for abnormalities. Upon binding of the UvrA(2)B(2) complex to a putative damaged site, the DNA wraps around one UvrB monomer. DNA wrap is dependent on ATP binding by UvrB and probably causes local melting of the DNA helix, facilitating insertion of UvrB beta-hairpin between the DNA strands. Then UvrB probes one DNA strand for the presence of a lesion. If a lesion is found the UvrA subunits dissociate and the UvrB-DNA preincision complex is formed. This complex is subsequently bound by UvrC and the second UvrB is released. If no lesion is found, the DNA wraps around the other UvrB subunit that will check the other stand for damage. The sequence is that of UvrABC system protein B from Clostridium botulinum (strain Kyoto / Type A2).